The following is a 160-amino-acid chain: UPF0178 protein PLES_56411 (160 aa).

Belongs to the UPF0178 family.

The sequence is that of UPF0178 protein PLES_56411 from Pseudomonas aeruginosa (strain LESB58).